The sequence spans 156 residues: ATP synthase subunit b (156 aa).

Residues 11 to 31 traverse the membrane as a helical segment; that stretch reads AIAFVLFVLFCMKYVWPPLMA.

The protein belongs to the ATPase B chain family. In terms of assembly, F-type ATPases have 2 components, F(1) - the catalytic core - and F(0) - the membrane proton channel. F(1) has five subunits: alpha(3), beta(3), gamma(1), delta(1), epsilon(1). F(0) has three main subunits: a(1), b(2) and c(10-14). The alpha and beta chains form an alternating ring which encloses part of the gamma chain. F(1) is attached to F(0) by a central stalk formed by the gamma and epsilon chains, while a peripheral stalk is formed by the delta and b chains.

It is found in the cell inner membrane. Functionally, f(1)F(0) ATP synthase produces ATP from ADP in the presence of a proton or sodium gradient. F-type ATPases consist of two structural domains, F(1) containing the extramembraneous catalytic core and F(0) containing the membrane proton channel, linked together by a central stalk and a peripheral stalk. During catalysis, ATP synthesis in the catalytic domain of F(1) is coupled via a rotary mechanism of the central stalk subunits to proton translocation. In terms of biological role, component of the F(0) channel, it forms part of the peripheral stalk, linking F(1) to F(0). This is ATP synthase subunit b from Sodalis glossinidius (strain morsitans).